A 176-amino-acid polypeptide reads, in one-letter code: NADH:riboflavin 5'-phosphate oxidoreductase (176 aa).

Functionally, provides the reduced form of flavin mononucleotide for the PIIA synthase reaction. The sequence is that of NADH:riboflavin 5'-phosphate oxidoreductase (snaC) from Streptomyces pristinaespiralis.